The sequence spans 145 residues: UPF0201 protein M164_1168 (145 aa).

This sequence belongs to the UPF0201 family.

This chain is UPF0201 protein M164_1168, found in Saccharolobus islandicus (strain M.16.4 / Kamchatka #3) (Sulfolobus islandicus).